A 259-amino-acid polypeptide reads, in one-letter code: Binding partner of ACD11 1 (259 aa).

Residues 6–77 form the RRM domain; the sequence is RSVKVGNLSS…QSVIIELAPN (72 aa). A disordered region spans residues 219 to 259; the sequence is GEVGQKTKEKVEAEQPSQPAQSQQQLPEGYSPIHSSEYSKN. Positions 232 to 243 are enriched in low complexity; that stretch reads EQPSQPAQSQQQ.

Interacts with ACD11, PR1F2 and PR1F3.

It is found in the cytoplasm. Its subcellular location is the membrane. The polypeptide is Binding partner of ACD11 1 (BPA1) (Arabidopsis thaliana (Mouse-ear cress)).